The following is a 365-amino-acid chain: tRNA/tmRNA (uracil-C(5))-methyltransferase (365 aa).

Residues Gln-188, Tyr-216, Asn-221, Glu-237, and Asp-297 each coordinate S-adenosyl-L-methionine. Cys-322 functions as the Nucleophile in the catalytic mechanism. Catalysis depends on Glu-356, which acts as the Proton acceptor.

It belongs to the class I-like SAM-binding methyltransferase superfamily. RNA M5U methyltransferase family. TrmA subfamily.

It catalyses the reaction uridine(54) in tRNA + S-adenosyl-L-methionine = 5-methyluridine(54) in tRNA + S-adenosyl-L-homocysteine + H(+). The catalysed reaction is uridine(341) in tmRNA + S-adenosyl-L-methionine = 5-methyluridine(341) in tmRNA + S-adenosyl-L-homocysteine + H(+). Dual-specificity methyltransferase that catalyzes the formation of 5-methyluridine at position 54 (m5U54) in all tRNAs, and that of position 341 (m5U341) in tmRNA (transfer-mRNA). This Aggregatibacter aphrophilus (strain NJ8700) (Haemophilus aphrophilus) protein is tRNA/tmRNA (uracil-C(5))-methyltransferase.